Consider the following 28-residue polypeptide: Omega-gliadin (28 aa).

The interval 1–28 (ARQLNPSDQELQSPQQLYPQQPYPQQPY) is disordered. A compositionally biased stretch (low complexity) spans 9–20 (QELQSPQQLYPQ).

The protein is Omega-gliadin of Triticum monococcum (Einkorn wheat).